Here is a 910-residue protein sequence, read N- to C-terminus: DNA mismatch repair protein MutS (910 aa).

A compositionally biased stretch (basic and acidic residues) spans 1–11 (MEAKVEEKEPE). The segment at 1-21 (MEAKVEEKEPEPVENAGPDAP) is disordered. ATP is bound at residue 658–665 (GPNMGGKS).

This sequence belongs to the DNA mismatch repair MutS family.

In terms of biological role, this protein is involved in the repair of mismatches in DNA. It is possible that it carries out the mismatch recognition step. This protein has a weak ATPase activity. The chain is DNA mismatch repair protein MutS from Brucella canis (strain ATCC 23365 / NCTC 10854 / RM-666).